Here is a 134-residue protein sequence, read N- to C-terminus: uncharacterized protein (134 aa).

The signal sequence occupies residues methionine 1–alanine 16.

This is an uncharacterized protein from Oryza sativa subsp. indica (Rice).